Reading from the N-terminus, the 251-residue chain is GTP cyclohydrolase FolE2 (251 aa).

Belongs to the GTP cyclohydrolase IV family.

The enzyme catalyses GTP + H2O = 7,8-dihydroneopterin 3'-triphosphate + formate + H(+). Its pathway is cofactor biosynthesis; 7,8-dihydroneopterin triphosphate biosynthesis; 7,8-dihydroneopterin triphosphate from GTP: step 1/1. In terms of biological role, converts GTP to 7,8-dihydroneopterin triphosphate. In Desulfotalea psychrophila (strain LSv54 / DSM 12343), this protein is GTP cyclohydrolase FolE2.